We begin with the raw amino-acid sequence, 430 residues long: Peptidoglycan DD-endopeptidase ShyA (430 aa).

The first 35 residues, 1–35 (MISKSIILRFSELSMRKKATLVGLPLLAVAAISSS), serve as a signal peptide directing secretion. Zn(2+) contacts are provided by His-297, Asp-301, and His-378.

Belongs to the peptidase M23B family. Requires Zn(2+) as cofactor.

It is found in the periplasm. The protein operates within cell wall degradation; peptidoglycan degradation. With respect to regulation, reduced activity in 0.5 mM EDTA and a complete loss of activity at higher EDTA concentrations. The effect of EDTA can be reversed by addition of 1 mM ZnCl(2). Conformational switching between open (catalytically active) and closed (catalytically inactive) conformation of this protein is suggested mechanism of its regulation. The signal or inducer of the conformational shift to the open form unmasking the active site is currently not understood. In terms of biological role, cell wall peptidoglycan (PG) DD-endopeptidase essential for cell growth and elongation. Hydrolyzes peptide cross-links which covalently connect adjacent PG strands probably to allow insertion of new glycans and thus cell wall expansion. Degrades purified whole PG sacculi in vitro. Releases predominantly short glycan chains from the PG. Cleaves D,D cross-linked muropeptides specifically preferring dimeric tetrapeptide-tetrapeptide (D44) substrates and has only little activity on dimeric tetrapeptide-pentapeptide (D45) substrates. Also converts more than 50% of tetrapeptide-tripeptide (D43) to product as well as more than 50% of D43M, which contains D-Met instead of D-Ala in the fourth position of the acceptor moiety. Cleaves the D,D bond between diaminopimelic acid (DAP) and D-Ala of the PG substrate in vitro. No cleavage of L,D bond connecting two DAP moieties. This chain is Peptidoglycan DD-endopeptidase ShyA, found in Vibrio cholerae serotype O1 (strain ATCC 39315 / El Tor Inaba N16961).